The chain runs to 212 residues: MSSNLAYLVYESMTSGLSSVSFYVLDTSNNQHPFHVLVTSENTYYYFDSSESVYIATSFNISVNGNVILTVSLNNLQKTGNMTLIVVVTLDIGTSLPGNLGTYVIQAIQALFAGVLINLGCSATAYYTIVNEQTGSSSTGSTGLSFSLTNDSQFVASGSISYSQYEVVNITQIIISCSTINVKENMITNTLTSSECTSSSGCTYTITITFTS.

This is an uncharacterized protein from Saccharolobus islandicus (Sulfolobus islandicus).